Consider the following 189-residue polypeptide: MEASMKIKEIIVVEGKDDTVAIKRAVDADTIETNGSAIGDHVIEQVKLAQQKRGVIIFTDPDYPGERIRKIISDKVPGCKHAFLPKEEALAKRKKGVGIEHASNESIRRALENIHEEMEAYTGEISWSDLVDAGLVGGEMAKSRRERMGKLLKIGYTNAKQLHKRLQMFQVSKESFAEAYKQVIQEEKK.

The Toprim domain occupies 8-91 (KEIIVVEGKD…AFLPKEEALA (84 aa)). The Mg(2+) site is built by E14, D60, and D62.

This sequence belongs to the ribonuclease M5 family. Mg(2+) serves as cofactor.

The protein resides in the cytoplasm. It carries out the reaction Endonucleolytic cleavage of RNA, removing 21 and 42 nucleotides, respectively, from the 5'- and 3'-termini of a 5S-rRNA precursor.. Required for correct processing of both the 5' and 3' ends of 5S rRNA precursor. Cleaves both sides of a double-stranded region yielding mature 5S rRNA in one step. In Bacillus cereus (strain ATCC 14579 / DSM 31 / CCUG 7414 / JCM 2152 / NBRC 15305 / NCIMB 9373 / NCTC 2599 / NRRL B-3711), this protein is Ribonuclease M5.